We begin with the raw amino-acid sequence, 432 residues long: Probable protein phosphatase 2C 33 (432 aa).

The 272-residue stretch at 27–298 (GGGSERPLVR…DDTTCVVVDI (272 aa)) folds into the PPM-type phosphatase domain. Positions 74, 75, 250, and 289 each coordinate Mn(2+).

Belongs to the PP2C family. Requires Mg(2+) as cofactor. Mn(2+) is required as a cofactor.

The enzyme catalyses O-phospho-L-seryl-[protein] + H2O = L-seryl-[protein] + phosphate. The catalysed reaction is O-phospho-L-threonyl-[protein] + H2O = L-threonyl-[protein] + phosphate. The polypeptide is Probable protein phosphatase 2C 33 (Oryza sativa subsp. japonica (Rice)).